The following is a 1485-amino-acid chain: MDEKPAVSESSNGSDVDSLSTASAYEQHRERLRDANPQGVTSHRSGVNVKEAEEEFSELNRQFSTISHQAHCLSKQISRASKPTGKTEDVERSDSPADSDEPWDLETALRGNRDAETAAGIRSKRIGVIWDNLTVRGMGGVKTYIKTFPDAIIDFFNVPETIMHMLGYGKKGKEFEILRNFRGVLQPGEMVLVLGRPGSGCTTFLKTITNQRFGYTSIDGDVLYGIFDADTFAKRFRGEAVYNQEDDVHQPTLTVKQTLGFALDTKTPGKRPLGVSKAEFREKVINMLLKMFNIEHTANTVIGNQFIRGVSGGERRRVSIAEMMITSATVLAWDNSTRGLDASTALDFAKSLRIMTNIYKTTTFVSLYQASENIYKQFDKVLVIDSGRQVFFGPASEARSYFESLGFKERPRQTTPDYLTGCTDPFEREFKEGRSEDDVPSTPDSLVEAFNRSSYSERLAQEMDAYRKKLEQEKHVYEDFEIANQEAKRKFTPKSSVYSIPFHLQIWALMQRQFLIKWQDRFAQTVSWITSTGVAIILGTVWLRLPKTSAGAFTRGGLLFISLLFNGFQAFSELVSTMMGRSIVNKHRQFTFYRPSALWIAQILVDTTFAIARILVFSIIVYFMCGLVLDAGAFFTFILIIVLGYLCMTCFFRVIGCMSPDFDYAMKFASVVITLFVLTSGYLIQWSSEQEWLRWLYYINPFGLGFAALMVNEFKDLTMTCTADSLVPSGPGYDDMASRVCTLAGGEPGSVIIPGASYLAKTFSYFPGDLWRNFGIMVALTVGFLTLNLYHGETLQFGAGGRTVTFYQKENKERRALNGALMEKRTNRESKDQSAANLKITSKSVFTWEDVCYDVPVPSGTRRLLQSVYGYVQPGKLTALMGASGAGKTTLLDVLASRKNIGVISGNILVDGAPPPGSFLRTVSYAEQLDIHEPMQTVREALRFSADLRQPYETPQSEKYEYVEGIIQLLELEDLADAIIGTPETGLSVEERKRVTIGVELAAKPELLLFLDEPTSGLDSQSAFNIIRFLRKLAAAGQAILCTIHQPNSALFENFDRLLLLQRGGECVYFGDIGEDSHVLLDYFRRNGADCPPDANPAEWMLDAIGAGQTRRIGDRDWGEIWRTSSEFEQVKREIIQIKAQRAEEVRQSGGSQIIVREYATPLWHQIKVVCKRTNIVFWRSRNYGFTRLFNHVVIALVTGLAFLNLDDSRASLQYRIFVIFNVTVLPAIILQQVEPRFEFSRLVFFRESACKSYSQFAFALSMVIAELPYSILCAVCFFLPLYYIPGFQAAPSRAGYQFLMVLITELFSVTLGQMISALTPNSFIASQINPPIVIIFSLFCGVAIPRPQMPGFWRAWLYQLDPFTRLISGMVTTELHGRTVSCSPSEFNRFQAPENQTCGEYMLPFFERGGLGYLADNTTQACEYCAYKIGDEFYSAFSMSFNTRWRDLGIFLAFIGSNLIILFLAVSFMSPRCRLRYKLIYDIF.

2 disordered regions span residues 1-57 (MDEK…EEFS) and 75-111 (KQIS…ALRG). Residues 8-24 (SESSNGSDVDSLSTASA) are compositionally biased toward polar residues. N-linked (GlcNAc...) asparagine glycosylation is present at N12. The span at 85–95 (GKTEDVERSDS) shows a compositional bias: basic and acidic residues. N132, N335, and N451 each carry an N-linked (GlcNAc...) asparagine glycan. The ABC transporter 1 domain maps to 163 to 411 (MHMLGYGKKG…FESLGFKERP (249 aa)). Helical transmembrane passes span 522–542 (FAQT…GTVW), 556–576 (GGLL…ELVS), 600–620 (IAQI…FSII), 623–643 (FMCG…IIVL), 664–684 (YAMK…GYLI), 691–711 (EWLR…ALMV), and 774–794 (FGIM…HGET). The 244-residue stretch at 846 to 1089 (FTWEDVCYDV…LLDYFRRNGA (244 aa)) folds into the ABC transporter 2 domain. 882–889 (GASGAGKT) provides a ligand contact to ATP. 5 helical membrane passes run 1184–1204 (YGFT…LAFL), 1211–1231 (ASLQ…AIIL), 1268–1288 (LPYS…IPGF), 1299–1319 (FLMV…ISAL), and 1325–1345 (IASQ…GVAI). Residues N1396 and N1418 are each glycosylated (N-linked (GlcNAc...) asparagine). The chain crosses the membrane as a helical span at residues 1449-1469 (LGIFLAFIGSNLIILFLAVSF).

It belongs to the ABC transporter superfamily. ABCG family. PDR (TC 3.A.1.205) subfamily.

Its subcellular location is the cell membrane. It catalyses the reaction fluconazole(in) + ATP + H2O = fluconazole(out) + ADP + phosphate + H(+). With respect to regulation, the efflux inhibitor FK506 does not impair the transport activity. ABC efflux transporter that confers resistance to fluconazole (FLC) but shows no resistance to other azoles. Is also able to transport rhodamine 6G (R-6G), a known substrate for many ABC transporters. The sequence is that of ABC multidrug transporter I from Aspergillus fumigatus (strain ATCC MYA-4609 / CBS 101355 / FGSC A1100 / Af293) (Neosartorya fumigata).